Reading from the N-terminus, the 690-residue chain is Eukaryotic translation initiation factor 3 subunit B (690 aa).

A compositionally biased stretch (basic and acidic residues) spans 1 to 11 (MAKKKSEEHSG). Residues 1–36 (MAKKKSEEHSGADANDSDYQEEPNFEDPPGFVDNIS) form a disordered region. Residues 15–25 (NDSDYQEEPNF) show a composition bias toward acidic residues. In terms of domain architecture, RRM spans 57 to 141 (SVVVVDNIPK…HTFAVNLFTD (85 aa)). 5 WD repeats span residues 207–246 (TRER…KIQK), 293–331 (DGMS…LLDL), 334–369 (IKIP…TLME), 442–484 (EIRE…KPSL), and 530–575 (PDHF…IKRT). A coiled-coil region spans residues 595–645 (EEKQKEIKKNLKKYYAAFEQKDRLRLTRASKELLEKRSQLRETFMEYRNKR).

Belongs to the eIF-3 subunit B family. Component of the eukaryotic translation initiation factor 3 (eIF-3) complex. The eIF-3 complex interacts with pix. Interacts with mxt.

It localises to the cytoplasm. Its function is as follows. RNA-binding component of the eukaryotic translation initiation factor 3 (eIF-3) complex, which is involved in protein synthesis of a specialized repertoire of mRNAs and, together with other initiation factors, stimulates binding of mRNA and methionyl-tRNAi to the 40S ribosome. The eIF-3 complex specifically targets and initiates translation of a subset of mRNAs involved in cell proliferation. The polypeptide is Eukaryotic translation initiation factor 3 subunit B (Drosophila yakuba (Fruit fly)).